The following is a 148-amino-acid chain: Large ribosomal subunit protein bL9 (148 aa).

Belongs to the bacterial ribosomal protein bL9 family.

Functionally, binds to the 23S rRNA. This Acidithiobacillus ferrooxidans (strain ATCC 23270 / DSM 14882 / CIP 104768 / NCIMB 8455) (Ferrobacillus ferrooxidans (strain ATCC 23270)) protein is Large ribosomal subunit protein bL9.